The following is a 127-amino-acid chain: MDAVAVYHGKISRETGEKLLLATGLDGSYLLRDSESVPGVYCLCVLYHGYIYTYRVSQTETGSWSAETAPGVHKRYFRKIKNLISAFQKPDQGIVIPLQYPVEKSSPRSTQGTTGIREDPDVCLKAP.

The region spanning 6–102 is the SH2 domain; the sequence is VYHGKISRET…GIVIPLQYPV (97 aa). Residues 67-92 are interaction with FYN SH3 domain; sequence ETAPGVHKRYFRKIKNLISAFQKPDQ. Lysine 89 is subject to N6-acetyllysine. Residues 104–127 form a disordered region; it reads KSSPRSTQGTTGIREDPDVCLKAP. Over residues 116–127 the composition is skewed to basic and acidic residues; that stretch reads IREDPDVCLKAP.

In terms of assembly, interacts with CD84, CD244, LY9, SLAMF1 and FYN. Interacts with NTRK1, NTRK2 and NTRK3.

Its subcellular location is the cytoplasm. Cytoplasmic adapter regulating receptors of the signaling lymphocytic activation molecule (SLAM) family such as SLAMF1, CD244, LY9, CD84, SLAMF6 and SLAMF7. In SLAM signaling seems to cooperate with SH2D1B/EAT-2. Initially it has been proposed that association with SLAMF1 prevents SLAMF1 binding to inhibitory effectors including INPP5D/SHIP1 and PTPN11/SHP-2. However, by simultaneous interactions, recruits FYN which subsequently phosphorylates and activates SLAMF1. Positively regulates CD244/2B4- and CD84-mediated natural killer (NK) cell functions. Can also promote CD48-, SLAMF6 -, LY9-, and SLAMF7-mediated NK cell activation. In the context of NK cell-mediated cytotoxicity enhances conjugate formation with target cells. May also regulate the activity of the neurotrophin receptors NTRK1, NTRK2 and NTRK3. In Saguinus oedipus (Cotton-top tamarin), this protein is SH2 domain-containing protein 1A (SH2D1A).